The primary structure comprises 256 residues: Alcohol dehydrogenase (256 aa).

Position 12–35 (12–35) interacts with NAD(+); the sequence is FVAGLGGIGLDTSKELVKRDLKNL. A substrate-binding site is contributed by Ser140. Tyr153 serves as the catalytic Proton acceptor.

The protein belongs to the short-chain dehydrogenases/reductases (SDR) family. As to quaternary structure, homodimer.

The catalysed reaction is a primary alcohol + NAD(+) = an aldehyde + NADH + H(+). It catalyses the reaction a secondary alcohol + NAD(+) = a ketone + NADH + H(+). This chain is Alcohol dehydrogenase (Adh), found in Drosophila tsacasi (Fruit fly).